The chain runs to 331 residues: Lipoate-protein ligase LplJ (331 aa).

Residues Asp27 to Asn214 form the BPL/LPL catalytic domain. ATP is bound by residues Arg69, Gly74 to Tyr77, and Lys131. A (R)-lipoate-binding site is contributed by Lys131.

This sequence belongs to the LplA family.

It localises to the cytoplasm. It catalyses the reaction L-lysyl-[lipoyl-carrier protein] + (R)-lipoate + ATP = N(6)-[(R)-lipoyl]-L-lysyl-[lipoyl-carrier protein] + AMP + diphosphate + H(+). It functions in the pathway protein modification; protein lipoylation via exogenous pathway; protein N(6)-(lipoyl)lysine from lipoate: step 1/2. It participates in protein modification; protein lipoylation via exogenous pathway; protein N(6)-(lipoyl)lysine from lipoate: step 2/2. Catalyzes both the ATP-dependent activation of exogenously supplied lipoate to lipoyl-AMP and the transfer of the activated lipoyl onto the lipoyl domains of lipoate-dependent enzymes. Is also able to use octanoate as substrate. The polypeptide is Lipoate-protein ligase LplJ (lplJ) (Bacillus subtilis (strain 168)).